The primary structure comprises 328 residues: GTPase Obg (328 aa).

The 159-residue stretch at 1-159 folds into the Obg domain; it reads MNFIDEVKIY…MWVQLSLKLL (159 aa). One can recognise an OBG-type G domain in the interval 160 to 327; sequence SDVGLVGLPN…IIKLALQTIK (168 aa). GTP contacts are provided by residues 166 to 173, 191 to 195, 212 to 215, 279 to 282, and 308 to 310; these read GLPNAGKS, FTTLV, DIPG, NKID, and STY. Residues serine 173 and threonine 193 each coordinate Mg(2+).

This sequence belongs to the TRAFAC class OBG-HflX-like GTPase superfamily. OBG GTPase family. Monomer. It depends on Mg(2+) as a cofactor.

The protein resides in the cytoplasm. An essential GTPase which binds GTP, GDP and possibly (p)ppGpp with moderate affinity, with high nucleotide exchange rates and a fairly low GTP hydrolysis rate. Plays a role in control of the cell cycle, stress response, ribosome biogenesis and in those bacteria that undergo differentiation, in morphogenesis control. This chain is GTPase Obg, found in Rickettsia bellii (strain RML369-C).